A 289-amino-acid chain; its full sequence is Ribosomal RNA small subunit methyltransferase A (289 aa).

The S-adenosyl-L-methionine site is built by asparagine 21, leucine 23, glycine 48, glutamate 69, aspartate 94, and asparagine 120.

Belongs to the class I-like SAM-binding methyltransferase superfamily. rRNA adenine N(6)-methyltransferase family. RsmA subfamily.

Its subcellular location is the cytoplasm. The enzyme catalyses adenosine(1518)/adenosine(1519) in 16S rRNA + 4 S-adenosyl-L-methionine = N(6)-dimethyladenosine(1518)/N(6)-dimethyladenosine(1519) in 16S rRNA + 4 S-adenosyl-L-homocysteine + 4 H(+). Specifically dimethylates two adjacent adenosines (A1518 and A1519) in the loop of a conserved hairpin near the 3'-end of 16S rRNA in the 30S particle. May play a critical role in biogenesis of 30S subunits. The chain is Ribosomal RNA small subunit methyltransferase A from Actinobacillus pleuropneumoniae serotype 3 (strain JL03).